The chain runs to 95 residues: Nickel-cobalt-cadmium resistance protein NccY (95 aa).

To A.eutrophus CnrY.

Its function is as follows. Component of the NCC cation-efflux system that confers resistance to nickel, cobalt and cadmium. May be involved in the regulation of NCC. This Alcaligenes xylosoxydans xylosoxydans (Achromobacter xylosoxidans) protein is Nickel-cobalt-cadmium resistance protein NccY (nccY).